The primary structure comprises 449 residues: Monoacylglycerol lipase (449 aa).

Lys-82 is covalently cross-linked (Glycyl lysine isopeptide (Lys-Gly) (interchain with G-Cter in ubiquitin)). An AB hydrolase-1 domain is found at 151-392 (PMLIILHGLT…LLLETSTGGH (242 aa)). Residues 230–234 (GFSLG) carry the GXSXG motif. Ser-232 (nucleophile) is an active-site residue. Active-site charge relay system residues include Asp-364 and His-392.

The protein belongs to the AB hydrolase superfamily. AB hydrolase 4 family.

The catalysed reaction is Hydrolyzes glycerol monoesters of long-chain fatty acids.. It carries out the reaction 1-hexadecanoylglycerol + H2O = glycerol + hexadecanoate + H(+). It catalyses the reaction 1-octadecanoylglycerol + H2O = octadecanoate + glycerol + H(+). The enzyme catalyses 1-(9Z-octadecenoyl)-glycerol + H2O = glycerol + (9Z)-octadecenoate + H(+). In terms of biological role, converts monoacylglycerides (MAG) to free fatty acids and glycerol. Has a preference for palmitoyl-MAG. Does not play a significant role in ethyl ester biosynthesis. Also possesses ester hydrolase and low but persistent TAG lipase activity. This Saccharomyces cerevisiae (strain ATCC 204508 / S288c) (Baker's yeast) protein is Monoacylglycerol lipase.